A 458-amino-acid chain; its full sequence is Bifunctional protein GlmU (458 aa).

The pyrophosphorylase stretch occupies residues 1-229 (MNKFAIVLAA…FDESLGVNDR (229 aa)). UDP-N-acetyl-alpha-D-glucosamine contacts are provided by residues 8–11 (LAAG), lysine 22, glutamine 72, and 77–78 (GT). Aspartate 102 is a binding site for Mg(2+). Glycine 139, glutamate 154, asparagine 169, and asparagine 227 together coordinate UDP-N-acetyl-alpha-D-glucosamine. Asparagine 227 is a binding site for Mg(2+). A linker region spans residues 230–250 (VALSQAEGTMRKRINHEHMVN). The N-acetyltransferase stretch occupies residues 251-458 (GVTLIDPATT…AKKMPHYRGQ (208 aa)). UDP-N-acetyl-alpha-D-glucosamine contacts are provided by arginine 332 and lysine 350. Residue histidine 362 is the Proton acceptor of the active site. UDP-N-acetyl-alpha-D-glucosamine is bound by residues tyrosine 365 and asparagine 376. Acetyl-CoA contacts are provided by alanine 379, serine 404, alanine 422, and arginine 439.

The protein in the N-terminal section; belongs to the N-acetylglucosamine-1-phosphate uridyltransferase family. This sequence in the C-terminal section; belongs to the transferase hexapeptide repeat family. As to quaternary structure, homotrimer. It depends on Mg(2+) as a cofactor.

It localises to the cytoplasm. The catalysed reaction is alpha-D-glucosamine 1-phosphate + acetyl-CoA = N-acetyl-alpha-D-glucosamine 1-phosphate + CoA + H(+). It carries out the reaction N-acetyl-alpha-D-glucosamine 1-phosphate + UTP + H(+) = UDP-N-acetyl-alpha-D-glucosamine + diphosphate. It participates in nucleotide-sugar biosynthesis; UDP-N-acetyl-alpha-D-glucosamine biosynthesis; N-acetyl-alpha-D-glucosamine 1-phosphate from alpha-D-glucosamine 6-phosphate (route II): step 2/2. It functions in the pathway nucleotide-sugar biosynthesis; UDP-N-acetyl-alpha-D-glucosamine biosynthesis; UDP-N-acetyl-alpha-D-glucosamine from N-acetyl-alpha-D-glucosamine 1-phosphate: step 1/1. The protein operates within bacterial outer membrane biogenesis; LPS lipid A biosynthesis. In terms of biological role, catalyzes the last two sequential reactions in the de novo biosynthetic pathway for UDP-N-acetylglucosamine (UDP-GlcNAc). The C-terminal domain catalyzes the transfer of acetyl group from acetyl coenzyme A to glucosamine-1-phosphate (GlcN-1-P) to produce N-acetylglucosamine-1-phosphate (GlcNAc-1-P), which is converted into UDP-GlcNAc by the transfer of uridine 5-monophosphate (from uridine 5-triphosphate), a reaction catalyzed by the N-terminal domain. In Lactococcus lactis subsp. cremoris (strain SK11), this protein is Bifunctional protein GlmU.